Here is a 187-residue protein sequence, read N- to C-terminus: Dihydrofolate reductase (187 aa).

A DHFR domain is found at 4–185 (PLNCIVAVSQ…IKYKFEVYEK (182 aa)). The tract at residues 8 to 37 (IVAVSQNMGIGKNGDFPWPMLRNEFKYFQR) is involved in methotrexate binding. NADP(+)-binding positions include alanine 10 and 16 to 22 (GIGKNGD). 31–36 (EFKYFQ) serves as a coordination point for substrate. An N6-acetyllysine; alternate modification is found at lysine 33. The residue at position 33 (lysine 33) is an N6-succinyllysine; alternate. 55-57 (RKT) is an NADP(+) binding site. The interval 60-70 (SIPEKNRPLKD) is involved in methotrexate binding. Arginine 71 is a substrate binding site. Residues 77-79 (SRE) and 117-124 (GGSSVYKE) contribute to the NADP(+) site. Threonine 137 is a binding site for methotrexate.

This sequence belongs to the dihydrofolate reductase family. Homodimer.

The protein localises to the mitochondrion. It localises to the cytoplasm. It carries out the reaction (6S)-5,6,7,8-tetrahydrofolate + NADP(+) = 7,8-dihydrofolate + NADPH + H(+). It participates in cofactor biosynthesis; tetrahydrofolate biosynthesis; 5,6,7,8-tetrahydrofolate from 7,8-dihydrofolate: step 1/1. Its function is as follows. Key enzyme in folate metabolism. Contributes to the de novo mitochondrial thymidylate biosynthesis pathway. Catalyzes an essential reaction for de novo glycine and purine synthesis, and for DNA precursor synthesis. Binds its own mRNA. The sequence is that of Dihydrofolate reductase (DHFR) from Mesocricetus auratus (Golden hamster).